The primary structure comprises 565 residues: Urocanate hydratase (565 aa).

NAD(+) contacts are provided by residues 61 to 62 (GG), Gln139, 185 to 187 (GMG), Glu205, Arg210, 251 to 252 (NA), 272 to 276 (QTSAH), 282 to 283 (YL), and Tyr331. The active site involves Cys419. A disordered region spans residues 453 to 472 (LDSGSVASPNRETESMRDGS). Over residues 463 to 472 (RETESMRDGS) the composition is skewed to basic and acidic residues. An NAD(+)-binding site is contributed by Gly501.

Belongs to the urocanase family. The cofactor is NAD(+).

Its subcellular location is the cytoplasm. The catalysed reaction is 4-imidazolone-5-propanoate = trans-urocanate + H2O. It participates in amino-acid degradation; L-histidine degradation into L-glutamate; N-formimidoyl-L-glutamate from L-histidine: step 2/3. Its function is as follows. Catalyzes the conversion of urocanate to 4-imidazolone-5-propionate. The chain is Urocanate hydratase from Pseudomonas syringae pv. tomato (strain ATCC BAA-871 / DC3000).